Consider the following 140-residue polypeptide: Putative nickel-responsive regulator 2 (140 aa).

Positions 77, 88, 90, and 96 each coordinate Ni(2+).

Belongs to the transcriptional regulatory CopG/NikR family. Requires Ni(2+) as cofactor.

Its function is as follows. Transcriptional regulator. The protein is Putative nickel-responsive regulator 2 of Methanothermobacter thermautotrophicus (strain ATCC 29096 / DSM 1053 / JCM 10044 / NBRC 100330 / Delta H) (Methanobacterium thermoautotrophicum).